The primary structure comprises 203 residues: Small ribosomal subunit protein uS4 (203 aa).

Positions 93-158 (LRLDNVVYRL…QQLVTRFLDL (66 aa)) constitute an S4 RNA-binding domain.

Belongs to the universal ribosomal protein uS4 family. As to quaternary structure, part of the 30S ribosomal subunit. Contacts protein S5. The interaction surface between S4 and S5 is involved in control of translational fidelity.

In terms of biological role, one of the primary rRNA binding proteins, it binds directly to 16S rRNA where it nucleates assembly of the body of the 30S subunit. Functionally, with S5 and S12 plays an important role in translational accuracy. This is Small ribosomal subunit protein uS4 from Akkermansia muciniphila (strain ATCC BAA-835 / DSM 22959 / JCM 33894 / BCRC 81048 / CCUG 64013 / CIP 107961 / Muc).